Consider the following 396-residue polypeptide: MTKLNAYFGEYGGQYVPQILVPALEQLEQAFIDAQEDPDFRSEFMGLLQEYAGRPTALTLTRNLTKGTKTKLYLKREDLLHGGAHKTNQVLGQALLAKRMGKNEIIAETGAGQHGVATALACALLGLKCRVYMGAKDVERQSPNVFRMKLMGATVIPVHSGSATLKDACNEALRDWSGSYETAHYLLGTAAGPHPFPTIVREFQRMIGEETKNQILAREGRLPDAVIACVGGGSNAIGMFADFIEEETVRLIGVEPAGKGIDTDQHGAPLKHGKTGIFFGMKAPLMQDENGQVEESYSVSAGLDFPSVGPQHAHLNAIGRAEYDSITDDEALDAFQELARSEGIIPALESSHALAHALKMARNNPEKEQLLVVNLSGRGDKDIFTVHAILEEKGAI.

Lysine 86 bears the N6-(pyridoxal phosphate)lysine mark.

The protein belongs to the TrpB family. In terms of assembly, tetramer of two alpha and two beta chains. It depends on pyridoxal 5'-phosphate as a cofactor.

The enzyme catalyses (1S,2R)-1-C-(indol-3-yl)glycerol 3-phosphate + L-serine = D-glyceraldehyde 3-phosphate + L-tryptophan + H2O. It participates in amino-acid biosynthesis; L-tryptophan biosynthesis; L-tryptophan from chorismate: step 5/5. Its function is as follows. The beta subunit is responsible for the synthesis of L-tryptophan from indole and L-serine. The chain is Tryptophan synthase beta chain from Vibrio vulnificus (strain CMCP6).